A 374-amino-acid polypeptide reads, in one-letter code: MVVPFPGSPRPTLGVEWEIALVDRVTRDLSNTAAEVFDAVANLAGPEDPRITKELLRNTVELVTGIHSTVGEAMDDLDESLDLLRRAANPLGVDLICAGTHPFAQWSTQLVTRTPDYDELIERTQWWGRQMLIWGVHVHVGVSSPQKVFPILNALLQRYPHLLALSASSPMWAGVNTGYASNRALMFQQLPTAGLPYQFANWGQYEDFISDQMKTGVITKIGGMHWDIRPAPRWGTIEVRVFDGISTRAELSSLVALVHCLIVDLDRRFEAGENLPNLQPWHVKENKWRAARYGLDAEIILDEDSNERLVTDDLNDLLEKLAPTAVRLGCADELAAVAEIPRRGASYQRQRQVAEATGGDLVAVVDALVKELGT.

It belongs to the glutamate--cysteine ligase type 2 family. YbdK subfamily.

It catalyses the reaction L-cysteine + L-glutamate + ATP = gamma-L-glutamyl-L-cysteine + ADP + phosphate + H(+). Functionally, ATP-dependent carboxylate-amine ligase which exhibits weak glutamate--cysteine ligase activity. The sequence is that of Putative glutamate--cysteine ligase 2-2 from Rhodococcus jostii (strain RHA1).